The primary structure comprises 37 residues: Large ribosomal subunit protein bL36 (37 aa).

The protein belongs to the bacterial ribosomal protein bL36 family.

This is Large ribosomal subunit protein bL36 from Francisella tularensis subsp. tularensis (strain FSC 198).